The sequence spans 126 residues: UPF0538 protein C2orf76 homolog (126 aa).

This sequence belongs to the UPF0538 family.

The sequence is that of UPF0538 protein C2orf76 homolog from Pongo abelii (Sumatran orangutan).